A 326-amino-acid polypeptide reads, in one-letter code: Nicotianamine synthase 2 (326 aa).

The protein belongs to the nicotianamine synthase (NAS)-like family. As to expression, expressed in roots.

It carries out the reaction 3 S-adenosyl-L-methionine = nicotianamine + 3 S-methyl-5'-thioadenosine + 3 H(+). In terms of biological role, synthesizes nicotianamine, a polyamine that is the first intermediate in the synthesis of the phytosiderophores of the mugineic acid type found in gramineae which serve as a sensor for the physiological iron status within the plant, and/or might be involved in the transport of iron. This Oryza sativa subsp. japonica (Rice) protein is Nicotianamine synthase 2 (NAS2).